A 636-amino-acid chain; its full sequence is Chaperone protein DnaK (636 aa).

Residues 579-636 (ELYKNAAPPPGADGQQGADGQQGADGQQGADGQQGADGQQGADGQTTESSSNDETKTN) form a disordered region. A compositionally biased stretch (low complexity) spans 590 to 623 (ADGQQGADGQQGADGQQGADGQQGADGQQGADGQ).

The protein belongs to the heat shock protein 70 family.

Its function is as follows. Acts as a chaperone. The protein is Chaperone protein DnaK of Nitrosopumilus maritimus (strain SCM1).